A 317-amino-acid chain; its full sequence is Cold tolerance protein 1 (317 aa).

It belongs to the CTO1 family.

Its function is as follows. Protein required for cold tolerance. Plays a role in the regulation of phosphate uptake. The polypeptide is Cold tolerance protein 1 (Saccharomyces cerevisiae (strain ATCC 204508 / S288c) (Baker's yeast)).